The following is a 132-amino-acid chain: Small ribosomal subunit protein uS8 (132 aa).

This sequence belongs to the universal ribosomal protein uS8 family. In terms of assembly, part of the 30S ribosomal subunit. Contacts proteins S5 and S12.

One of the primary rRNA binding proteins, it binds directly to 16S rRNA central domain where it helps coordinate assembly of the platform of the 30S subunit. This chain is Small ribosomal subunit protein uS8, found in Psychrobacter sp. (strain PRwf-1).